A 436-amino-acid polypeptide reads, in one-letter code: Glutamyl-tRNA reductase (436 aa).

Residues 49–52 (TCNR), S109, 114–116 (EGQ), and Q120 each bind substrate. Catalysis depends on C50, which acts as the Nucleophile. 198–203 (GAGRMS) lines the NADP(+) pocket.

It belongs to the glutamyl-tRNA reductase family. In terms of assembly, homodimer.

It carries out the reaction (S)-4-amino-5-oxopentanoate + tRNA(Glu) + NADP(+) = L-glutamyl-tRNA(Glu) + NADPH + H(+). The protein operates within porphyrin-containing compound metabolism; protoporphyrin-IX biosynthesis; 5-aminolevulinate from L-glutamyl-tRNA(Glu): step 1/2. It functions in the pathway porphyrin-containing compound metabolism; chlorophyll biosynthesis. Catalyzes the NADPH-dependent reduction of glutamyl-tRNA(Glu) to glutamate 1-semialdehyde (GSA). The protein is Glutamyl-tRNA reductase of Prochlorococcus marinus (strain MIT 9215).